The primary structure comprises 102 residues: Monothiol glutaredoxin-S8 (102 aa).

The Glutaredoxin domain occupies 1-101; it reads MEKIQKMISE…PMLKRFGALW (101 aa). Position 21 (C21) interacts with [2Fe-2S] cluster. The Responsive for interaction with TGA factors signature appears at 99 to 102; the sequence is ALWL.

This sequence belongs to the glutaredoxin family. CC-type subfamily.

The protein resides in the cytoplasm. Its subcellular location is the nucleus. In terms of biological role, may only reduce GSH-thiol disulfides, but not protein disulfides. The chain is Monothiol glutaredoxin-S8 (GRXS8) from Arabidopsis thaliana (Mouse-ear cress).